The sequence spans 518 residues: Organic cation/carnitine transporter 3 (518 aa).

The disordered stretch occupies residues Met1–Arg23. Over Met1–Cys32 the chain is Cytoplasmic. A helical membrane pass occupies residues Ile33–Phe53. Over Asp54–Gly122 the chain is Extracellular. 2 N-linked (GlcNAc...) asparagine glycosylation sites follow: Asn83 and Asn94. A helical transmembrane segment spans residues Phe123 to Ala143. Residues Asp144–Cys157 lie on the Cytoplasmic side of the membrane. A helical membrane pass occupies residues Leu158–Phe178. Over Leu179–Arg180 the chain is Extracellular. The helical transmembrane segment at Phe181–Leu197 threads the bilayer. ATP is bound at residue Ser198 to Lys205. Topologically, residues Ser198 to Val210 are cytoplasmic. A helical membrane pass occupies residues Gly211–Ile231. Residues Asn232–Asn239 are Extracellular-facing. The chain crosses the membrane as a helical span at residues Leu240–Val259. Residues Arg260–Arg325 are Cytoplasmic-facing. The helical transmembrane segment at Leu326 to Ala346 threads the bilayer. Residues Leu347–Tyr355 are Extracellular-facing. A helical membrane pass occupies residues Leu356–Ile376. At Asp377–Asp383 the chain is on the cytoplasmic side. The helical transmembrane segment at Ala384–Gln404 threads the bilayer. At Gln405–Gln410 the chain is on the extracellular side. A helical transmembrane segment spans residues Ile411 to Tyr431. The Cytoplasmic portion of the chain corresponds to Thr432 to Ser443. The helical transmembrane segment at Ala444–Ala464 threads the bilayer. The Extracellular segment spans residues Ala465–Gln470. A helical transmembrane segment spans residues Phe471–Leu491. Residues Pro492–Gly518 lie on the Cytoplasmic side of the membrane.

Belongs to the major facilitator (TC 2.A.1) superfamily. Organic cation transporter (TC 2.A.1.19) family. Mostly expressed in siliques, mainly in young seeds. Present in stems (cortical cells and parenchyma cells), at the basis of secondary inflorescences, and at the base of trichomes.

It localises to the vacuole membrane. High affinity carnitine transporter involved in the active cellular uptake of carnitine. Also transports organic cations. The sequence is that of Organic cation/carnitine transporter 3 (OCT3) from Arabidopsis thaliana (Mouse-ear cress).